Here is a 113-residue protein sequence, read N- to C-terminus: Probable 4-amino-4-deoxy-L-arabinose-phosphoundecaprenol flippase subunit ArnE (113 aa).

3 helical membrane passes run 39–59 (IFWL…WLRL), 62–82 (ILPL…VTLI), and 91–111 (VNVK…LMSM). The EamA domain maps to 42–111 (LITAIAMLGF…IMLGIVLMSM (70 aa)).

It belongs to the ArnE family. In terms of assembly, heterodimer of ArnE and ArnF.

The protein localises to the cell inner membrane. It participates in bacterial outer membrane biogenesis; lipopolysaccharide biosynthesis. Translocates 4-amino-4-deoxy-L-arabinose-phosphoundecaprenol (alpha-L-Ara4N-phosphoundecaprenol) from the cytoplasmic to the periplasmic side of the inner membrane. This is Probable 4-amino-4-deoxy-L-arabinose-phosphoundecaprenol flippase subunit ArnE from Proteus mirabilis (strain HI4320).